The sequence spans 238 residues: UDP-2,3-diacylglucosamine hydrolase (238 aa).

Mn(2+)-binding residues include Asp8, His10, Asp41, Asn78, and His113. Substrate is bound at residue 78–79 (NR). Substrate contacts are provided by Asp121, Ser159, Asn163, Lys166, and His194. Residues His194 and His196 each coordinate Mn(2+).

It belongs to the LpxH family. It depends on Mn(2+) as a cofactor.

It localises to the cell inner membrane. The enzyme catalyses UDP-2-N,3-O-bis[(3R)-3-hydroxytetradecanoyl]-alpha-D-glucosamine + H2O = 2-N,3-O-bis[(3R)-3-hydroxytetradecanoyl]-alpha-D-glucosaminyl 1-phosphate + UMP + 2 H(+). It functions in the pathway glycolipid biosynthesis; lipid IV(A) biosynthesis; lipid IV(A) from (3R)-3-hydroxytetradecanoyl-[acyl-carrier-protein] and UDP-N-acetyl-alpha-D-glucosamine: step 4/6. Functionally, hydrolyzes the pyrophosphate bond of UDP-2,3-diacylglucosamine to yield 2,3-diacylglucosamine 1-phosphate (lipid X) and UMP by catalyzing the attack of water at the alpha-P atom. Involved in the biosynthesis of lipid A, a phosphorylated glycolipid that anchors the lipopolysaccharide to the outer membrane of the cell. This chain is UDP-2,3-diacylglucosamine hydrolase, found in Shewanella halifaxensis (strain HAW-EB4).